The chain runs to 498 residues: Phenylalanine--tRNA ligase alpha subunit (498 aa).

Residues threonine 328, 372–374 (QVE), and tyrosine 412 contribute to the L-phenylalanine site. Glutamate 414 provides a ligand contact to Mg(2+). Phenylalanine 438 is a binding site for L-phenylalanine.

This sequence belongs to the class-II aminoacyl-tRNA synthetase family. Phe-tRNA synthetase alpha subunit type 2 subfamily. Tetramer of two alpha and two beta subunits. Requires Mg(2+) as cofactor.

It is found in the cytoplasm. It carries out the reaction tRNA(Phe) + L-phenylalanine + ATP = L-phenylalanyl-tRNA(Phe) + AMP + diphosphate + H(+). The sequence is that of Phenylalanine--tRNA ligase alpha subunit from Drosophila melanogaster (Fruit fly).